A 479-amino-acid polypeptide reads, in one-letter code: Adenylate kinase 8 (479 aa).

Adenylate kinase regions lie at residues 58-258 (PRIV…TYVQ) and 269-471 (PRVL…SGII). An ATP-binding site is contributed by 67–72 (ASGKTT). The NMP 1 stretch occupies residues 87–113 (TLENLILNEFSYTATEARRLYLQRKTV). AMP contacts are provided by residues 140–143 (GIPE), glutamine 147, and arginine 203. The segment at 177-206 (GKRIDPQTGEIYHTTFDWPPESEIQNRLMV) is LID 1. An ATP-binding site is contributed by 278–283 (GSGKSL). The NMP 2 stretch occupies residues 298–327 (CCGQLLKEAVADRTTFGELIQPFFEKEMAV). AMP-binding positions include 325–327 (MAV), 354–357 (GVPR), and glutamine 361. The interval 391 to 424 (LRRIDPVTGERYHLMYKPPPTMEIQARLLQNPKD) is LID 2. Position 392 (arginine 392) interacts with ATP.

It belongs to the adenylate kinase family. As to quaternary structure, interacts with CFAP45 and CFAP52; CFAP45 and AK8 dimerization may create a cavity at the interface of the dimer that can accommodate AMP. Expressed in respiratory cells (at protein level).

The protein localises to the cytoplasm. It is found in the cytosol. It localises to the cytoskeleton. The protein resides in the cilium axoneme. The catalysed reaction is AMP + ATP = 2 ADP. The enzyme catalyses a 2'-deoxyribonucleoside 5'-diphosphate + ATP = a 2'-deoxyribonucleoside 5'-triphosphate + ADP. It catalyses the reaction a ribonucleoside 5'-diphosphate + ATP = a ribonucleoside 5'-triphosphate + ADP. Nucleoside monophosphate (NMP) kinase that catalyzes the reversible transfer of the terminal phosphate group between nucleoside triphosphates and monophosphates. Has highest activity toward AMP, and weaker activity toward dAMP, CMP and dCMP. Also displays broad nucleoside diphosphate kinase activity. The sequence is that of Adenylate kinase 8 (AK8) from Homo sapiens (Human).